The primary structure comprises 157 residues: Ribonuclease H (157 aa).

Positions 5–146 constitute an RNase H type-1 domain; that stretch reads IMKQVEIFTD…CDDLARTAAE (142 aa). Residues D14, E52, D74, and D138 each coordinate Mg(2+).

It belongs to the RNase H family. As to quaternary structure, monomer. Requires Mg(2+) as cofactor.

The protein localises to the cytoplasm. The catalysed reaction is Endonucleolytic cleavage to 5'-phosphomonoester.. In terms of biological role, endonuclease that specifically degrades the RNA of RNA-DNA hybrids. This is Ribonuclease H from Aliivibrio salmonicida (strain LFI1238) (Vibrio salmonicida (strain LFI1238)).